Reading from the N-terminus, the 110-residue chain is Large ribosomal subunit protein uL22 (110 aa).

The protein belongs to the universal ribosomal protein uL22 family. In terms of assembly, part of the 50S ribosomal subunit.

In terms of biological role, this protein binds specifically to 23S rRNA; its binding is stimulated by other ribosomal proteins, e.g. L4, L17, and L20. It is important during the early stages of 50S assembly. It makes multiple contacts with different domains of the 23S rRNA in the assembled 50S subunit and ribosome. Its function is as follows. The globular domain of the protein is located near the polypeptide exit tunnel on the outside of the subunit, while an extended beta-hairpin is found that lines the wall of the exit tunnel in the center of the 70S ribosome. The sequence is that of Large ribosomal subunit protein uL22 from Aggregatibacter actinomycetemcomitans (Actinobacillus actinomycetemcomitans).